The primary structure comprises 209 residues: Holliday junction branch migration complex subunit RuvA (209 aa).

Positions Met1 to Ser70 are domain I. The tract at residues Thr71–Thr149 is domain II. A flexible linker region spans residues Pro150 to Ile160. The interval Ile160–Ser209 is domain III.

It belongs to the RuvA family. In terms of assembly, homotetramer. Forms an RuvA(8)-RuvB(12)-Holliday junction (HJ) complex. HJ DNA is sandwiched between 2 RuvA tetramers; dsDNA enters through RuvA and exits via RuvB. An RuvB hexamer assembles on each DNA strand where it exits the tetramer. Each RuvB hexamer is contacted by two RuvA subunits (via domain III) on 2 adjacent RuvB subunits; this complex drives branch migration. In the full resolvosome a probable DNA-RuvA(4)-RuvB(12)-RuvC(2) complex forms which resolves the HJ.

It localises to the cytoplasm. In terms of biological role, the RuvA-RuvB-RuvC complex processes Holliday junction (HJ) DNA during genetic recombination and DNA repair, while the RuvA-RuvB complex plays an important role in the rescue of blocked DNA replication forks via replication fork reversal (RFR). RuvA specifically binds to HJ cruciform DNA, conferring on it an open structure. The RuvB hexamer acts as an ATP-dependent pump, pulling dsDNA into and through the RuvAB complex. HJ branch migration allows RuvC to scan DNA until it finds its consensus sequence, where it cleaves and resolves the cruciform DNA. This is Holliday junction branch migration complex subunit RuvA from Gloeothece citriformis (strain PCC 7424) (Cyanothece sp. (strain PCC 7424)).